The chain runs to 213 residues: Octanoyltransferase (213 aa).

The 176-residue stretch at 32–207 (NSTLDEIWLV…NILALLNNPD (176 aa)) folds into the BPL/LPL catalytic domain. Substrate contacts are provided by residues 71–78 (RGGQVTYH), 138–140 (SLG), and 151–153 (GLA). The active-site Acyl-thioester intermediate is the Cys-169.

It belongs to the LipB family.

It localises to the cytoplasm. It carries out the reaction octanoyl-[ACP] + L-lysyl-[protein] = N(6)-octanoyl-L-lysyl-[protein] + holo-[ACP] + H(+). Its pathway is protein modification; protein lipoylation via endogenous pathway; protein N(6)-(lipoyl)lysine from octanoyl-[acyl-carrier-protein]: step 1/2. Catalyzes the transfer of endogenously produced octanoic acid from octanoyl-acyl-carrier-protein onto the lipoyl domains of lipoate-dependent enzymes. Lipoyl-ACP can also act as a substrate although octanoyl-ACP is likely to be the physiological substrate. The sequence is that of Octanoyltransferase from Shigella flexneri serotype 5b (strain 8401).